Reading from the N-terminus, the 729-residue chain is Phosphoribosylformylglycinamidine synthase subunit PurL (729 aa).

Histidine 54 is a catalytic residue. Tyrosine 57 and lysine 96 together coordinate ATP. Glutamate 98 provides a ligand contact to Mg(2+). Substrate is bound by residues 99–102 and arginine 121; that span reads SHNH. Catalysis depends on histidine 100, which acts as the Proton acceptor. Position 122 (aspartate 122) interacts with Mg(2+). Glutamine 245 provides a ligand contact to substrate. Aspartate 273 serves as a coordination point for Mg(2+). Residue 317–319 participates in substrate binding; it reads ETQ. Aspartate 495 and glycine 532 together coordinate ATP. Asparagine 533 serves as a coordination point for Mg(2+). Residue serine 535 coordinates substrate.

This sequence belongs to the FGAMS family. In terms of assembly, monomer. Part of the FGAM synthase complex composed of 1 PurL, 1 PurQ and 2 PurS subunits.

The protein resides in the cytoplasm. The catalysed reaction is N(2)-formyl-N(1)-(5-phospho-beta-D-ribosyl)glycinamide + L-glutamine + ATP + H2O = 2-formamido-N(1)-(5-O-phospho-beta-D-ribosyl)acetamidine + L-glutamate + ADP + phosphate + H(+). Its pathway is purine metabolism; IMP biosynthesis via de novo pathway; 5-amino-1-(5-phospho-D-ribosyl)imidazole from N(2)-formyl-N(1)-(5-phospho-D-ribosyl)glycinamide: step 1/2. Its function is as follows. Part of the phosphoribosylformylglycinamidine synthase complex involved in the purines biosynthetic pathway. Catalyzes the ATP-dependent conversion of formylglycinamide ribonucleotide (FGAR) and glutamine to yield formylglycinamidine ribonucleotide (FGAM) and glutamate. The FGAM synthase complex is composed of three subunits. PurQ produces an ammonia molecule by converting glutamine to glutamate. PurL transfers the ammonia molecule to FGAR to form FGAM in an ATP-dependent manner. PurS interacts with PurQ and PurL and is thought to assist in the transfer of the ammonia molecule from PurQ to PurL. This Staphylococcus epidermidis (strain ATCC 12228 / FDA PCI 1200) protein is Phosphoribosylformylglycinamidine synthase subunit PurL.